Reading from the N-terminus, the 36-residue chain is uncharacterized protein (36 aa).

The helical transmembrane segment at 13–35 (SVILSPFPCCVLKSYLTVIYISF) threads the bilayer.

It localises to the host membrane. This is an uncharacterized protein from Pseudoalteromonas espejiana (Bacteriophage PM2).